Consider the following 189-residue polypeptide: Large ribosomal subunit protein uL5c (189 aa).

Belongs to the universal ribosomal protein uL5 family. In terms of assembly, part of the 50S ribosomal subunit; contacts the 5S rRNA.

It localises to the plastid. The protein resides in the chloroplast. Functionally, binds 5S rRNA, forms part of the central protuberance of the 50S subunit. The chain is Large ribosomal subunit protein uL5c (rpl5) from Chara vulgaris (Common stonewort).